The chain runs to 267 residues: MEMO1 family protein aq_890 (267 aa).

It belongs to the MEMO1 family.

The polypeptide is MEMO1 family protein aq_890 (Aquifex aeolicus (strain VF5)).